Consider the following 299-residue polypeptide: Prohibitin-2 (299 aa).

At A2 the chain carries N-acetylalanine. The segment at 19 to 49 (MGTALKLLLGAGAVAYGIRESVFTVEGGHRA) is necessary for transcriptional repression. Y128 bears the Phosphotyrosine mark. The residue at position 147 (K147) is an N6-acetyllysine. The interval 150-174 (ASQLITQRAQVSLLIRRELTERAKD) is necessary for transcriptional repression. The residue at position 151 (S151) is a Phosphoserine. Residues 190-238 (SREYTAAVEAKQVAQQEAQRAQFLVEKAKQEQRQKIVQAEGEAEAARML) are a coiled coil. N6-acetyllysine occurs at positions 200, 250, and 262.

Belongs to the prohibitin family. In terms of assembly, the mitochondrial prohibitin complex consists of two subunits (PHB1 and PHB2), assembled into a membrane-associated ring-shaped supercomplex of approximately 1 mDa. Interacts with ESR1, HDAC1 and HDAC5. Interacts with ZNF703. Interacts with STOML2. Interacts with ARFGEF3. Interacts with SPHK2. Interacts with COX4I1; the interaction associates PHB2 with COX. Interacts with MAP1LC3B (membrane-bound form LC3-II); the interaction is direct and upon mitochondrial depolarization and proteasome-dependent outer membrane rupture. Interacts with IGFBP6 (via C-terminal domain). Interacts with CLPB. Interacts with CD86 (via cytoplasmic domain); the interactions increases after priming with CD40. Interacts with AFG3L2. Interacts with DNAJC19. Interacts with AKT2; this interaction may be important for myogenic differentiation. In terms of processing, phosphorylated. Tyrosine phosphorylation is indirectly stimulated by IGFBP6.

It is found in the mitochondrion inner membrane. Its subcellular location is the cytoplasm. It localises to the nucleus. The protein localises to the cell membrane. In terms of biological role, protein with pleiotropic attributes mediated in a cell-compartment- and tissue-specific manner, which include the plasma membrane-associated cell signaling functions, mitochondrial chaperone, and transcriptional co-regulator of transcription factors and sex steroid hormones in the nucleus. Functionally, in the mitochondria, together with PHB, forms large ring complexes (prohibitin complexes) in the inner mitochondrial membrane (IMM) and functions as a chaperone protein that stabilizes mitochondrial respiratory enzymes and maintains mitochondrial integrity in the IMM, which is required for mitochondrial morphogenesis, neuronal survival, and normal lifespan. The prohibitin complex, with DNAJC19, regulates cardiolipin remodeling and the protein turnover of OMA1 in a cardiolipin-binding manner. Also regulates cytochrome-c oxidase assembly (COX) and mitochondrial respiration. Binding to sphingoid 1-phosphate (SPP) modulates its regulator activity. Has a key role of mitophagy receptor involved in targeting mitochondria for autophagic degradation. Involved in mitochondrial-mediated antiviral innate immunity, activates RIG-I-mediated signal transduction and production of IFNB1 and pro-inflammatory cytokine IL6. Its function is as follows. In the nucleus, serves as transcriptional co-regulator. Acts as a mediator of transcriptional repression by nuclear hormone receptors via recruitment of histone deacetylases. Functions as an estrogen receptor (ER)-selective coregulator that potentiates the inhibitory activities of antiestrogens and represses the activity of estrogens. Competes with NCOA1 for modulation of ER transcriptional activity. In the plasma membrane, is involved in IGFBP6-induced cell migration. Cooperates with CD86 to mediate CD86-signaling in B lymphocytes that regulates the level of IgG1 produced through the activation of distal signaling intermediates. Upon CD40 engagement, required to activate NF-kappa-B signaling pathway via phospholipase C and protein kinase C activation. The polypeptide is Prohibitin-2 (PHB2) (Bos taurus (Bovine)).